The following is a 229-amino-acid chain: Uracil-DNA glycosylase (229 aa).

The active-site Proton acceptor is the Asp67.

This sequence belongs to the uracil-DNA glycosylase (UDG) superfamily. UNG family.

Its subcellular location is the cytoplasm. It catalyses the reaction Hydrolyzes single-stranded DNA or mismatched double-stranded DNA and polynucleotides, releasing free uracil.. Excises uracil residues from the DNA which can arise as a result of misincorporation of dUMP residues by DNA polymerase or due to deamination of cytosine. This Coxiella burnetii (strain RSA 493 / Nine Mile phase I) protein is Uracil-DNA glycosylase.